We begin with the raw amino-acid sequence, 201 residues long: Cerebellin-4 (201 aa).

Residues 1 to 27 form the signal peptide; the sequence is MGSGRRALSAVPAVLLVLTLPGLPVWA. N-linked (GlcNAc...) asparagine glycosylation is found at Asn-29 and Asn-88. Residues 66 to 201 form the C1q domain; the sequence is AANSKVAFSA…TFSGFLVFPL (136 aa).

In terms of assembly, homohexamer; disulfide-linked homotrimers. The trimers are assembled via the globular C1q domains. The trimers associate via N-terminal cysteine residues to form disulfide-linked hexamers. May form oligomers with CBLN1, CBLN2 and CBLN3 prior to secretion. Strongly interacts with DCC in a NTN1-displaceable fashion. Weakly binds to NRXN1 and NRXN2 long and short isoforms produced by alternative promoter usage. Interaction with NRXN3 short isoform is hardly detectable; no interaction at all with NRXN3 long isoform. In terms of processing, sialoglycoprotein.

Its subcellular location is the secreted. It localises to the synapse. Functionally, acts as a synaptic organizer in specific subsets of neurons in the brain. Essential for the formation and maintenance of inhibitory GABAergic synapses. Promotes the development of dendrite-targeting inhibitory GABAergic synapses made by somatostatin-positive interneurons. May contribute to the function of ventral medial habenula region of the brain implicated in the regulation of anxiety-related behaviors. May play a role in CBLN3 export from the endoplasmic reticulum and secretion. The chain is Cerebellin-4 (CBLN4) from Homo sapiens (Human).